We begin with the raw amino-acid sequence, 255 residues long: Kallikrein-4 (255 aa).

The signal sequence occupies residues 1–25 (MMVTARTPWGWFLGCLILEVTGASA). A propeptide spanning residues 26–31 (SSVSSR) is cleaved from the precursor. The 222-residue stretch at 32-253 (IIQGQDCSPH…FTNWIQTIIQ (222 aa)) folds into the Peptidase S1 domain. Residue His-41 coordinates Zn(2+). Cys-57 and Cys-73 are joined by a disulfide. Catalysis depends on His-72, which acts as the Charge relay system. Residue Glu-92 participates in Zn(2+) binding. The Charge relay system role is filled by Asp-117. Residues Asn-124 and Asn-170 are each glycosylated (N-linked (GlcNAc...) asparagine). 3 disulfides stabilise this stretch: Cys-149-Cys-214, Cys-179-Cys-193, and Cys-204-Cys-229. The Charge relay system role is filled by Ser-208.

This sequence belongs to the peptidase S1 family. Kallikrein subfamily. Post-translationally, N-glycosylated. The N-glycan structures are of complex diantennary or triantennary type, which may be further modified with up to 2 sialic acid residues.

It localises to the secreted. Functionally, has a major role in enamel formation. Required during the maturation stage of tooth development for clearance of enamel proteins and normal structural patterning of the crystalline matrix. This chain is Kallikrein-4, found in Mus musculus (Mouse).